We begin with the raw amino-acid sequence, 459 residues long: Bifunctional protein GlmU (459 aa).

The pyrophosphorylase stretch occupies residues 1–230; it reads MTTRNTIILA…FDESMGVNDR (230 aa). UDP-N-acetyl-alpha-D-glucosamine-binding positions include 9–12, K23, Q73, 78–79, 101–103, G140, E155, N170, and N228; these read LAAG, GT, and SGD. D103 serves as a coordination point for Mg(2+). Residue N228 coordinates Mg(2+). A linker region spans residues 231–251; it reads VALSAATKIMRDRINEAHMRD. Residues 252–459 are N-acetyltransferase; it reads GVTLIDPATT…YQKLPYRGED (208 aa). Residues R333 and K351 each contribute to the UDP-N-acetyl-alpha-D-glucosamine site. The active-site Proton acceptor is H363. Positions 366 and 377 each coordinate UDP-N-acetyl-alpha-D-glucosamine. Acetyl-CoA-binding positions include 386–387, S405, A423, and R440; that span reads NY.

The protein in the N-terminal section; belongs to the N-acetylglucosamine-1-phosphate uridyltransferase family. This sequence in the C-terminal section; belongs to the transferase hexapeptide repeat family. In terms of assembly, homotrimer. Requires Mg(2+) as cofactor.

The protein resides in the cytoplasm. The catalysed reaction is alpha-D-glucosamine 1-phosphate + acetyl-CoA = N-acetyl-alpha-D-glucosamine 1-phosphate + CoA + H(+). It catalyses the reaction N-acetyl-alpha-D-glucosamine 1-phosphate + UTP + H(+) = UDP-N-acetyl-alpha-D-glucosamine + diphosphate. It functions in the pathway nucleotide-sugar biosynthesis; UDP-N-acetyl-alpha-D-glucosamine biosynthesis; N-acetyl-alpha-D-glucosamine 1-phosphate from alpha-D-glucosamine 6-phosphate (route II): step 2/2. It participates in nucleotide-sugar biosynthesis; UDP-N-acetyl-alpha-D-glucosamine biosynthesis; UDP-N-acetyl-alpha-D-glucosamine from N-acetyl-alpha-D-glucosamine 1-phosphate: step 1/1. The protein operates within bacterial outer membrane biogenesis; LPS lipid A biosynthesis. In terms of biological role, catalyzes the last two sequential reactions in the de novo biosynthetic pathway for UDP-N-acetylglucosamine (UDP-GlcNAc). The C-terminal domain catalyzes the transfer of acetyl group from acetyl coenzyme A to glucosamine-1-phosphate (GlcN-1-P) to produce N-acetylglucosamine-1-phosphate (GlcNAc-1-P), which is converted into UDP-GlcNAc by the transfer of uridine 5-monophosphate (from uridine 5-triphosphate), a reaction catalyzed by the N-terminal domain. In Levilactobacillus brevis (strain ATCC 367 / BCRC 12310 / CIP 105137 / JCM 1170 / LMG 11437 / NCIMB 947 / NCTC 947) (Lactobacillus brevis), this protein is Bifunctional protein GlmU.